Here is a 253-residue protein sequence, read N- to C-terminus: 3-dehydroquinate dehydratase (253 aa).

3-dehydroquinate contacts are provided by residues 46–48 and arginine 82; that span reads EFR. The Proton donor/acceptor role is filled by histidine 143. Lysine 170 acts as the Schiff-base intermediate with substrate in catalysis. Arginine 213, serine 232, and glutamine 236 together coordinate 3-dehydroquinate.

This sequence belongs to the type-I 3-dehydroquinase family. As to quaternary structure, homodimer.

It catalyses the reaction 3-dehydroquinate = 3-dehydroshikimate + H2O. Its pathway is metabolic intermediate biosynthesis; chorismate biosynthesis; chorismate from D-erythrose 4-phosphate and phosphoenolpyruvate: step 3/7. Its function is as follows. Involved in the third step of the chorismate pathway, which leads to the biosynthesis of aromatic amino acids. Catalyzes the cis-dehydration of 3-dehydroquinate (DHQ) and introduces the first double bond of the aromatic ring to yield 3-dehydroshikimate. This is 3-dehydroquinate dehydratase from Clostridium novyi (strain NT).